The following is a 690-amino-acid chain: Glycine--tRNA ligase beta subunit (690 aa).

Belongs to the class-II aminoacyl-tRNA synthetase family. Tetramer of two alpha and two beta subunits.

It localises to the cytoplasm. The enzyme catalyses tRNA(Gly) + glycine + ATP = glycyl-tRNA(Gly) + AMP + diphosphate. This is Glycine--tRNA ligase beta subunit from Desulfitobacterium hafniense (strain DSM 10664 / DCB-2).